Consider the following 975-residue polypeptide: Probable dipeptidyl-aminopeptidase B (975 aa).

A compositionally biased stretch (basic and acidic residues) spans 1-20; sequence MAEHGHNMWEEEPSKGRDSL. Residues 1 to 111 are disordered; it reads MAEHGHNMWE…LSAASGSAGK (111 aa). Over 1–125 the chain is Cytoplasmic; sequence MAEHGHNMWE…YRMMDRGLRR (125 aa). The segment covering 22–31 has biased composition (low complexity); sequence SDSSASTTSL. The span at 68-84 shows a compositional bias: acidic residues; the sequence is LDDEDPLKDEASGDYDL. A helical; Signal-anchor for type II membrane protein transmembrane segment spans residues 126–146; the sequence is VLIIASLVFVTAWVGGLFIYI. Over 147–975 the chain is Vacuolar; sequence SHKSYLHGSE…IDNAKPQGKR (829 aa). Asn207, Asn397, and Asn622 each carry an N-linked (GlcNAc...) asparagine glycan. Ser826 serves as the catalytic Charge relay system. The N-linked (GlcNAc...) asparagine glycan is linked to Asn885. Residues Asp903 and His936 each act as charge relay system in the active site.

The protein belongs to the peptidase S9B family.

It localises to the vacuole membrane. It catalyses the reaction Release of an N-terminal dipeptide, Xaa-Yaa-|-Zaa-, from a polypeptide, preferentially when Yaa is Pro, provided Zaa is neither Pro nor hydroxyproline.. Its function is as follows. Type IV dipeptidyl-peptidase which removes N-terminal dipeptides sequentially from polypeptides having unsubstituted N-termini provided that the penultimate residue is proline. This chain is Probable dipeptidyl-aminopeptidase B (DAPB), found in Grosmannia clavigera (strain kw1407 / UAMH 11150) (Blue stain fungus).